A 400-amino-acid polypeptide reads, in one-letter code: S-adenosylmethionine synthase (400 aa).

Residue His17 participates in ATP binding. Asp19 contributes to the Mg(2+) binding site. Glu45 is a K(+) binding site. Positions 58 and 101 each coordinate L-methionine. The flexible loop stretch occupies residues 101-111 (QSADIAMGVDQ). ATP-binding positions include 177–179 (DGK), 244–245 (RF), Asp253, 259–260 (RK), Ala276, and Lys280. Asp253 contacts L-methionine. Residue Lys284 coordinates L-methionine.

The protein belongs to the AdoMet synthase family. As to quaternary structure, homotetramer; dimer of dimers. Requires Mg(2+) as cofactor. The cofactor is K(+).

It localises to the cytoplasm. The catalysed reaction is L-methionine + ATP + H2O = S-adenosyl-L-methionine + phosphate + diphosphate. Its pathway is amino-acid biosynthesis; S-adenosyl-L-methionine biosynthesis; S-adenosyl-L-methionine from L-methionine: step 1/1. Catalyzes the formation of S-adenosylmethionine (AdoMet) from methionine and ATP. The overall synthetic reaction is composed of two sequential steps, AdoMet formation and the subsequent tripolyphosphate hydrolysis which occurs prior to release of AdoMet from the enzyme. This Bacillus velezensis (strain DSM 23117 / BGSC 10A6 / LMG 26770 / FZB42) (Bacillus amyloliquefaciens subsp. plantarum) protein is S-adenosylmethionine synthase.